A 309-amino-acid polypeptide reads, in one-letter code: Extracellular agarase (309 aa).

The segment at residues 1–30 is a signal peptide (tat-type signal); the sequence is MVNRRDLIKWSAVALGAGAGLAGPAPAAHA. The GH16 domain maps to 33 to 309; that stretch reads LEWEQYPVPA…YRWVRTYQAV (277 aa). Catalysis depends on Glu-155, which acts as the Nucleophile. Glu-160 (proton donor) is an active-site residue.

This sequence belongs to the glycosyl hydrolase 16 family. Predicted to be exported by the Tat system. The position of the signal peptide cleavage has been experimentally proven.

The protein localises to the secreted. It carries out the reaction Hydrolysis of (1-&gt;4)-beta-D-galactosidic linkages in agarose, giving the tetramer as the predominant product.. The sequence is that of Extracellular agarase (dagA) from Streptomyces coelicolor (strain ATCC BAA-471 / A3(2) / M145).